A 125-amino-acid polypeptide reads, in one-letter code: Small ribosomal subunit protein uS12 (125 aa).

Residue aspartate 89 is modified to 3-methylthioaspartic acid.

This sequence belongs to the universal ribosomal protein uS12 family. In terms of assembly, part of the 30S ribosomal subunit. Contacts proteins S8 and S17. May interact with IF1 in the 30S initiation complex.

Its function is as follows. With S4 and S5 plays an important role in translational accuracy. Functionally, interacts with and stabilizes bases of the 16S rRNA that are involved in tRNA selection in the A site and with the mRNA backbone. Located at the interface of the 30S and 50S subunits, it traverses the body of the 30S subunit contacting proteins on the other side and probably holding the rRNA structure together. The combined cluster of proteins S8, S12 and S17 appears to hold together the shoulder and platform of the 30S subunit. This chain is Small ribosomal subunit protein uS12, found in Bordetella avium (strain 197N).